A 238-amino-acid chain; its full sequence is Orotidine 5'-phosphate decarboxylase (238 aa).

Substrate is bound by residues Asp-10, Lys-32, 59–68 (DLKLHDIPNT), Thr-122, Arg-184, Gln-193, Gly-213, and Arg-214. The active-site Proton donor is Lys-61.

Belongs to the OMP decarboxylase family. Type 1 subfamily. As to quaternary structure, homodimer.

The enzyme catalyses orotidine 5'-phosphate + H(+) = UMP + CO2. Its pathway is pyrimidine metabolism; UMP biosynthesis via de novo pathway; UMP from orotate: step 2/2. Catalyzes the decarboxylation of orotidine 5'-monophosphate (OMP) to uridine 5'-monophosphate (UMP). In Bacillus cereus (strain G9842), this protein is Orotidine 5'-phosphate decarboxylase.